Consider the following 255-residue polypeptide: tRNA (guanine-N(1)-)-methyltransferase (255 aa).

Residues Gly-117 and 137–142 (LGDFVL) each bind S-adenosyl-L-methionine.

This sequence belongs to the RNA methyltransferase TrmD family. As to quaternary structure, homodimer.

It localises to the cytoplasm. The enzyme catalyses guanosine(37) in tRNA + S-adenosyl-L-methionine = N(1)-methylguanosine(37) in tRNA + S-adenosyl-L-homocysteine + H(+). In terms of biological role, specifically methylates guanosine-37 in various tRNAs. This chain is tRNA (guanine-N(1)-)-methyltransferase, found in Paraburkholderia phytofirmans (strain DSM 17436 / LMG 22146 / PsJN) (Burkholderia phytofirmans).